Reading from the N-terminus, the 155-residue chain is Protein SprT-like (155 aa).

The SprT-like domain occupies 6-148 (LQRLVERVSL…VCGQCGGKLM (143 aa)). Residue His-67 coordinates Zn(2+). The active site involves Glu-68. His-71 provides a ligand contact to Zn(2+).

This sequence belongs to the SprT family. Zn(2+) serves as cofactor.

Its subcellular location is the cytoplasm. This chain is Protein SprT-like, found in Geobacillus sp. (strain WCH70).